The following is a 160-amino-acid chain: tRNA (cytidine(34)-2'-O)-methyltransferase (160 aa).

Leu-78, Gly-100, Ile-122, and Ser-130 together coordinate S-adenosyl-L-methionine.

Belongs to the class IV-like SAM-binding methyltransferase superfamily. RNA methyltransferase TrmH family. TrmL subfamily. Homodimer.

Its subcellular location is the cytoplasm. The catalysed reaction is cytidine(34) in tRNA + S-adenosyl-L-methionine = 2'-O-methylcytidine(34) in tRNA + S-adenosyl-L-homocysteine + H(+). It carries out the reaction 5-carboxymethylaminomethyluridine(34) in tRNA(Leu) + S-adenosyl-L-methionine = 5-carboxymethylaminomethyl-2'-O-methyluridine(34) in tRNA(Leu) + S-adenosyl-L-homocysteine + H(+). Functionally, methylates the ribose at the nucleotide 34 wobble position in the two leucyl isoacceptors tRNA(Leu)(CmAA) and tRNA(Leu)(cmnm5UmAA). Catalyzes the methyl transfer from S-adenosyl-L-methionine to the 2'-OH of the wobble nucleotide. This Haemophilus influenzae (strain ATCC 51907 / DSM 11121 / KW20 / Rd) protein is tRNA (cytidine(34)-2'-O)-methyltransferase.